We begin with the raw amino-acid sequence, 224 residues long: Protein GrpE (224 aa).

Residues 1-72 (MEKERDVAQE…KAKEEQNEEL (72 aa)) are disordered. Residues 10–19 (EQATYEQESP) are compositionally biased toward polar residues. Residues 20-67 (NAERQEELKENEHQEKNAPEEQEKVREENGRQDAQKDEIGDPEKAKEE) show a composition bias toward basic and acidic residues.

Belongs to the GrpE family. As to quaternary structure, homodimer.

The protein localises to the cytoplasm. Participates actively in the response to hyperosmotic and heat shock by preventing the aggregation of stress-denatured proteins, in association with DnaK and GrpE. It is the nucleotide exchange factor for DnaK and may function as a thermosensor. Unfolded proteins bind initially to DnaJ; upon interaction with the DnaJ-bound protein, DnaK hydrolyzes its bound ATP, resulting in the formation of a stable complex. GrpE releases ADP from DnaK; ATP binding to DnaK triggers the release of the substrate protein, thus completing the reaction cycle. Several rounds of ATP-dependent interactions between DnaJ, DnaK and GrpE are required for fully efficient folding. The polypeptide is Protein GrpE (Parageobacillus thermoglucosidasius (Geobacillus thermoglucosidasius)).